We begin with the raw amino-acid sequence, 166 residues long: Phospholipase A2 inhibitor clone 06/08 (166 aa).

The N-terminal stretch at 1–19 is a signal peptide; that stretch reads MRLILLSGLLLLGIFLANG. The 116-residue stretch at 46–161 folds into the C-type lectin domain; that stretch reads LRGAFLTVYK…CDDNLLVVCE (116 aa). Residues Asn61 and Asn122 are each glycosylated (N-linked (GlcNAc...) asparagine). Intrachain disulfides connect Cys83-Cys160 and Cys138-Cys152.

Belongs to the alpha-type phospholipase A2 inhibitor family. In terms of assembly, homotrimer; non-covalently linked. Expressed by the liver.

Its subcellular location is the secreted. Functionally, this phospholipase A2 inhibitor binds directly phospholipase A2 in the presence or absence of calcium. The protein is Phospholipase A2 inhibitor clone 06/08 of Bothrops neuwiedi (Neuwied's lancehead).